The chain runs to 641 residues: YAP1-binding protein 2 (641 aa).

This sequence belongs to the YBP1 family.

It is found in the cytoplasm. In terms of biological role, involved in oxidative stress response and redox homeostasis. Required for hydrogen peroxide-induced activation of YAP1. Acts in a parallele pathway to YBP1. This Saccharomyces cerevisiae (strain ATCC 204508 / S288c) (Baker's yeast) protein is YAP1-binding protein 2.